The following is a 215-amino-acid chain: Imidazole glycerol phosphate synthase subunit HisH (215 aa).

In terms of domain architecture, Glutamine amidotransferase type-1 spans Thr-3–Leu-215. The active-site Nucleophile is Cys-81. Residues His-196 and Glu-198 contribute to the active site.

In terms of assembly, heterodimer of HisH and HisF.

The protein resides in the cytoplasm. The catalysed reaction is 5-[(5-phospho-1-deoxy-D-ribulos-1-ylimino)methylamino]-1-(5-phospho-beta-D-ribosyl)imidazole-4-carboxamide + L-glutamine = D-erythro-1-(imidazol-4-yl)glycerol 3-phosphate + 5-amino-1-(5-phospho-beta-D-ribosyl)imidazole-4-carboxamide + L-glutamate + H(+). The enzyme catalyses L-glutamine + H2O = L-glutamate + NH4(+). It functions in the pathway amino-acid biosynthesis; L-histidine biosynthesis; L-histidine from 5-phospho-alpha-D-ribose 1-diphosphate: step 5/9. IGPS catalyzes the conversion of PRFAR and glutamine to IGP, AICAR and glutamate. The HisH subunit catalyzes the hydrolysis of glutamine to glutamate and ammonia as part of the synthesis of IGP and AICAR. The resulting ammonia molecule is channeled to the active site of HisF. The protein is Imidazole glycerol phosphate synthase subunit HisH of Bifidobacterium longum (strain NCC 2705).